The primary structure comprises 413 residues: Ras association domain-containing protein 5 (413 aa).

Residues 1 to 105 are disordered; that stretch reads MASPAIGQRP…RDVRSIFEQP (105 aa). Over residues 61-74 the composition is skewed to basic and acidic residues; the sequence is ARGDPEPTPRDCRH. Residues 117–165 form a Phorbol-ester/DAG-type zinc finger; it reads GHRFAELALRGGPGWCDLCGREVLRQALRCANCKFTCHPECRSLIQLDC. Phosphoserine occurs at positions 177 and 274. The 95-residue stretch at 265-359 folds into the Ras-associating domain; that stretch reads PAATTDKRTS…LSFVLKENET (95 aa). The residue at position 347 (Thr-347) is a Phosphothreonine. Residues 361-408 enclose the SARAH domain; sequence DVEWDAFSIPELQNFLTILEKEEQDKIHQLQKKYNKFRQKLEEALRES.

In terms of assembly, interacts directly with activated HRAS; a RASSF5-STK4/MST1 complex probably associates with activated HRAS. Interacts with KRAS. Probably interacts with Ras-like GTPases RRAS, MRAS, RAP1B, RAP2A and RALA. Interacts with RRAS2. Can self-associate. Interacts with RSSF1 isoform A. The RSSF1 isoform A-RSSF5 heterodimer probably mediates the association of RSSF1 with HRAS. Isoform 2 interacts with activated RAP1A and ITGAL/LFA-1. Binds STK4/MST1, inhibiting STK4/MST1 autoactivation.

The protein localises to the cytoplasm. It localises to the cytoskeleton. Its function is as follows. Potential tumor suppressor. Seems to be involved in lymphocyte adhesion by linking RAP1A activation upon T-cell receptor or chemokine stimulation to integrin activation. Stimulates lymphocyte polarization and the patch-like distribution of ITGAL/LFA-1, resulting in an enhanced adhesion to ICAM1. Together with RAP1A may participate in regulation of microtubule growth. The association with activated RAP1A is required for directional movement of endothelial cells during wound healing. May be involved in regulation of Ras apoptotic function. The RASSF5-STK4/MST1 complex may mediate HRAS and KRAS induced apoptosis. This chain is Ras association domain-containing protein 5 (Rassf5), found in Rattus norvegicus (Rat).